The primary structure comprises 311 residues: Putative HTH-type transcriptional regulatory protein MTH_967 (311 aa).

One can recognise an HTH cro/C1-type domain in the interval 134–192 (LREVREEYNLSLKDLADLAHVSRKTIYKYENGLARASAETAMILEEILNIRITLSIDIF). The segment at residues 145–164 (LKDLADLAHVSRKTIYKYEN) is a DNA-binding region (H-T-H motif).

The protein is Putative HTH-type transcriptional regulatory protein MTH_967 of Methanothermobacter thermautotrophicus (strain ATCC 29096 / DSM 1053 / JCM 10044 / NBRC 100330 / Delta H) (Methanobacterium thermoautotrophicum).